A 408-amino-acid polypeptide reads, in one-letter code: MKDVLERFLGYIRIDTQSSEESDTVPTTKTQLEFAKKLGEELKAIGLKDVSVDENGYVMATLESNIDKKVPTIGFIAHMDTSPDLSGTNINPRIVEKYDGQDIVLNKEKNIVLKINEFPEILEYKGQDIVVTDGNTLLGADDKAGIAEIITAMEYLINHPEIKHGTIKVGFTPDEEVGKGADHFDVKKFGADLAYTLDGGGIGELECETFNAAKAKVIIEGRNVHPGSAKNKMTNAVLVANKFINMLPENEVPERTEGYEGFFHLLSVKSEVETAELNYIIRDFDRKKFEERKEQIKEVGKKINEEYNKEIVCVKVEDQYYNMKEKIDEVKYVVDIAHDAMKAIDIEPILVPIRGGTDGSRLSFMGLPTPNLFAGGHNFHGRFEFVPVLSMEKAAELVVKIAELYANR.

His-78 lines the Zn(2+) pocket. Asp-80 is an active-site residue. Zn(2+) is bound at residue Asp-141. Glu-175 serves as the catalytic Proton acceptor. Zn(2+) is bound by residues Glu-176, Asp-198, and His-380.

The protein belongs to the peptidase M20B family. Requires Zn(2+) as cofactor.

The protein resides in the cytoplasm. It catalyses the reaction Release of the N-terminal residue from a tripeptide.. Functionally, cleaves the N-terminal amino acid of tripeptides. This is Peptidase T from Clostridium botulinum (strain 657 / Type Ba4).